Consider the following 130-residue polypeptide: UPF0251 protein Mevan_1492 (130 aa).

Belongs to the UPF0251 family.

This Methanococcus vannielii (strain ATCC 35089 / DSM 1224 / JCM 13029 / OCM 148 / SB) protein is UPF0251 protein Mevan_1492.